Here is a 321-residue protein sequence, read N- to C-terminus: Transaldolase (321 aa).

The active-site Schiff-base intermediate with substrate is Lys-132.

It belongs to the transaldolase family. Type 1 subfamily. Homodimer.

It localises to the cytoplasm. It catalyses the reaction D-sedoheptulose 7-phosphate + D-glyceraldehyde 3-phosphate = D-erythrose 4-phosphate + beta-D-fructose 6-phosphate. Its pathway is carbohydrate degradation; pentose phosphate pathway; D-glyceraldehyde 3-phosphate and beta-D-fructose 6-phosphate from D-ribose 5-phosphate and D-xylulose 5-phosphate (non-oxidative stage): step 2/3. Functionally, transaldolase is important for the balance of metabolites in the pentose-phosphate pathway. In Rhizobium etli (strain CIAT 652), this protein is Transaldolase.